Consider the following 350-residue polypeptide: Phenylalanine--tRNA ligase alpha subunit (350 aa).

Glu-259 lines the Mg(2+) pocket.

The protein belongs to the class-II aminoacyl-tRNA synthetase family. Phe-tRNA synthetase alpha subunit type 1 subfamily. As to quaternary structure, tetramer of two alpha and two beta subunits. Requires Mg(2+) as cofactor.

Its subcellular location is the cytoplasm. The catalysed reaction is tRNA(Phe) + L-phenylalanine + ATP = L-phenylalanyl-tRNA(Phe) + AMP + diphosphate + H(+). The protein is Phenylalanine--tRNA ligase alpha subunit (pheS) of Rickettsia prowazekii (strain Madrid E).